Here is a 357-residue protein sequence, read N- to C-terminus: 3-isopropylmalate dehydrogenase (357 aa).

An NAD(+)-binding site is contributed by 76–89 (GPKWDALDSNIRPE). The substrate site is built by arginine 96, arginine 106, arginine 134, and aspartate 224. Residues aspartate 224, aspartate 248, and aspartate 252 each coordinate Mg(2+). 282–294 (GSAPDIAGQGVAN) serves as a coordination point for NAD(+).

This sequence belongs to the isocitrate and isopropylmalate dehydrogenases family. LeuB type 1 subfamily. As to quaternary structure, homodimer. It depends on Mg(2+) as a cofactor. Mn(2+) serves as cofactor.

The protein resides in the cytoplasm. The catalysed reaction is (2R,3S)-3-isopropylmalate + NAD(+) = 4-methyl-2-oxopentanoate + CO2 + NADH. It participates in amino-acid biosynthesis; L-leucine biosynthesis; L-leucine from 3-methyl-2-oxobutanoate: step 3/4. Catalyzes the oxidation of 3-carboxy-2-hydroxy-4-methylpentanoate (3-isopropylmalate) to 3-carboxy-4-methyl-2-oxopentanoate. The product decarboxylates to 4-methyl-2 oxopentanoate. The protein is 3-isopropylmalate dehydrogenase of Saccharophagus degradans (strain 2-40 / ATCC 43961 / DSM 17024).